A 227-amino-acid chain; its full sequence is Enolase-phosphatase E1 (227 aa).

It belongs to the HAD-like hydrolase superfamily. MasA/MtnC family. As to quaternary structure, monomer. It depends on Mg(2+) as a cofactor.

The enzyme catalyses 5-methylsulfanyl-2,3-dioxopentyl phosphate + H2O = 1,2-dihydroxy-5-(methylsulfanyl)pent-1-en-3-one + phosphate. The protein operates within amino-acid biosynthesis; L-methionine biosynthesis via salvage pathway; L-methionine from S-methyl-5-thio-alpha-D-ribose 1-phosphate: step 3/6. It participates in amino-acid biosynthesis; L-methionine biosynthesis via salvage pathway; L-methionine from S-methyl-5-thio-alpha-D-ribose 1-phosphate: step 4/6. Bifunctional enzyme that catalyzes the enolization of 2,3-diketo-5-methylthiopentyl-1-phosphate (DK-MTP-1-P) into the intermediate 2-hydroxy-3-keto-5-methylthiopentenyl-1-phosphate (HK-MTPenyl-1-P), which is then dephosphorylated to form the acireductone 1,2-dihydroxy-3-keto-5-methylthiopentene (DHK-MTPene). The chain is Enolase-phosphatase E1 from Gluconobacter oxydans (strain 621H) (Gluconobacter suboxydans).